The chain runs to 148 residues: Cystatin-C (148 aa).

Positions 1–30 are cleaved as a signal peptide; sequence MVGSPRAPLLLLASLIVALALALAVSPAAA. Glutamine 31 is subject to Pyrrolidone carboxylic acid. A Secondary area of contact motif is present at residues 84–88; that stretch reads QVVSG. Intrachain disulfides connect cysteine 102-cysteine 112 and cysteine 126-cysteine 146.

Its subcellular location is the secreted. Its function is as follows. This is a thiol proteinase inhibitor. The polypeptide is Cystatin-C (CST3) (Bos taurus (Bovine)).